The following is a 661-amino-acid chain: Cartilage acidic protein 1 (661 aa).

The N-terminal stretch at 1-27 (MAPSADPGMSRMLPFLLLLWFLPITEG) is a signal peptide. The FG-GAP 1; atypical repeat unit spans residues 46 to 88 (DYDSNPTQLNYGVAVTDVDHDGDFEIVVAGYNGPNLVLKYDRA). The FG-GAP 2; atypical repeat unit spans residues 105–147 (YALRDRQGNAIGVTACDIDGDGREEIYFLNTNNAFSGVATYTD). One copy of the FG-GAP 3; atypical repeat lies at 283–333 (AGVDDPHQHGRGVALADFNRDGKVDIVYGNWNGPHRLYLQMSTHGKVRFRD). One copy of the FG-GAP 4; atypical repeat lies at 395–437 (GDALEPEGRGTGGVVTDFDGDGMLDLILSHGESMAQPLSVFRG). The EGF-like domain occupies 559-605 (DTNECIQFPFVCPRDKPVCVNTYGSYRCRTNKKCSRGYEPNEDGTAC). Cystine bridges form between Cys563/Cys577, Cys570/Cys586, and Cys592/Cys605. O-linked (GalNAc...) threonine glycosylation is found at Thr608, Thr618, Thr619, Thr621, and Thr626.

O-glycosylated. In terms of tissue distribution, expressed in the interterritorial matrix of articular deep zone cartilage (at protein level). Isoform 1 and isoform 2 are expressed in brain. Isoform 1 is detected in lung and chondrocytes. Detected in cartilage, bone, cultured chondrocytes and lung, and at low levels in heart. Not detected in osteoblasts.

The protein localises to the secreted. The protein resides in the extracellular space. It localises to the extracellular matrix. This chain is Cartilage acidic protein 1 (CRTAC1), found in Homo sapiens (Human).